The sequence spans 199 residues: DnaJ homolog subfamily C member 5B (199 aa).

Residues serine 14 and serine 16 each carry the phosphoserine modification. The J domain maps to 19 to 84; that stretch reads ALYEILGLHK…SKRNIYDKYG (66 aa).

As to quaternary structure, interacts with the chaperone complex consisting of HSC70 and SGTA. In terms of processing, palmitoylated.

It is found in the membrane. In Sus scrofa (Pig), this protein is DnaJ homolog subfamily C member 5B (DNAJC5B).